We begin with the raw amino-acid sequence, 96 residues long: CRISPR-associated endoribonuclease Cas2 1 (96 aa).

Asp8 contributes to the Mg(2+) binding site.

The protein belongs to the CRISPR-associated endoribonuclease Cas2 protein family. Homodimer, forms a heterotetramer with a Cas1 homodimer. It depends on Mg(2+) as a cofactor.

In terms of biological role, CRISPR (clustered regularly interspaced short palindromic repeat), is an adaptive immune system that provides protection against mobile genetic elements (viruses, transposable elements and conjugative plasmids). CRISPR clusters contain sequences complementary to antecedent mobile elements and target invading nucleic acids. CRISPR clusters are transcribed and processed into CRISPR RNA (crRNA). Functions as a ssRNA-specific endoribonuclease. Involved in the integration of spacer DNA into the CRISPR cassette. The chain is CRISPR-associated endoribonuclease Cas2 1 from Moorella thermoacetica (strain ATCC 39073 / JCM 9320).